The following is a 145-amino-acid chain: Anaerobic nitrite reductase NSHB5 (145 aa).

Residues 2–142 (GFSETQEELV…LAAAIKEEMK (141 aa)) form the Globin domain. Positions 35–39 (EIAPA) match the Homodimerization motif. The heme b site is built by Ser45, His59, Lys61, Arg84, Thr88, and His89. Residues 96–108 (DAHFEVVKTALLD) carry the Homodimerization motif.

Belongs to the plant globin family. In terms of assembly, homodimer. It depends on heme b as a cofactor. In terms of tissue distribution, expressed in embryonic (embryos, coleoptiles and seminal roots) and vegetative (leaves and roots) organs.

It localises to the cytoplasm. The protein localises to the nucleus. It catalyses the reaction Fe(III)-heme b-[protein] + nitric oxide + H2O = Fe(II)-heme b-[protein] + nitrite + 2 H(+). Functionally, phytoglobin that reduces nitrite to nitric oxide under anoxic conditions (e.g. during flooding or in waterlogged soil). May not function as an oxygen storage or transport protein. Has an unusually high affinity for O(2) through an hexacoordinate heme iron because of a very low dissociation constant. The sequence is that of Anaerobic nitrite reductase NSHB5 from Oryza sativa subsp. indica (Rice).